The chain runs to 137 residues: Basic phospholipase A2 beta-bungarotoxin A-AL4 chain (137 aa).

An N-terminal signal peptide occupies residues 1-10 (LAVCVSLLGA). Residues 11-18 (ANIPPQHL) constitute a propeptide that is removed on maturation. 6 disulfides stabilise this stretch: Cys-45–Cys-137, Cys-47–Cys-63, Cys-62–Cys-118, Cys-69–Cys-111, Cys-79–Cys-104, and Cys-97–Cys-109. Residues Tyr-46, Gly-48, and Gly-50 each coordinate Ca(2+). His-66 is a catalytic residue. Asp-67 is a Ca(2+) binding site. The active site involves Asp-112.

This sequence belongs to the phospholipase A2 family. Group I subfamily. D49 sub-subfamily. As to quaternary structure, heterodimer; disulfide-linked. The A chains have phospholipase A2 activity and the B chains show homology with the basic protease inhibitors. Ca(2+) is required as a cofactor. Expressed by the venom gland.

The protein localises to the secreted. It catalyses the reaction a 1,2-diacyl-sn-glycero-3-phosphocholine + H2O = a 1-acyl-sn-glycero-3-phosphocholine + a fatty acid + H(+). Snake venom phospholipase A2 (PLA2) that inhibits neuromuscular transmission by blocking acetylcholine release from the nerve termini. PLA2 catalyzes the calcium-dependent hydrolysis of the 2-acyl groups in 3-sn-phosphoglycerides. The polypeptide is Basic phospholipase A2 beta-bungarotoxin A-AL4 chain (Bungarus multicinctus (Many-banded krait)).